The following is a 253-amino-acid chain: Sulfate transporter CysZ (253 aa).

Transmembrane regions (helical) follow at residues 31 to 51, 75 to 95, 151 to 171, and 222 to 242; these read FVIL…WWLF, LLWP…FSTI, IVLL…PVLW, and IPLL…AMWV.

The protein belongs to the CysZ family.

Its subcellular location is the cell inner membrane. Functionally, high affinity, high specificity proton-dependent sulfate transporter, which mediates sulfate uptake. Provides the sulfur source for the cysteine synthesis pathway. This chain is Sulfate transporter CysZ, found in Escherichia coli O127:H6 (strain E2348/69 / EPEC).